Consider the following 184-residue polypeptide: ATP synthase subunit b, chloroplastic (184 aa).

A helical membrane pass occupies residues 26–48 (ILATNLINLSVVLGVLIFFGKGV).

Belongs to the ATPase B chain family. As to quaternary structure, F-type ATPases have 2 components, F(1) - the catalytic core - and F(0) - the membrane proton channel. F(1) has five subunits: alpha(3), beta(3), gamma(1), delta(1), epsilon(1). F(0) has four main subunits: a(1), b(1), b'(1) and c(10-14). The alpha and beta chains form an alternating ring which encloses part of the gamma chain. F(1) is attached to F(0) by a central stalk formed by the gamma and epsilon chains, while a peripheral stalk is formed by the delta, b and b' chains.

It is found in the plastid. Its subcellular location is the chloroplast thylakoid membrane. Its function is as follows. F(1)F(0) ATP synthase produces ATP from ADP in the presence of a proton or sodium gradient. F-type ATPases consist of two structural domains, F(1) containing the extramembraneous catalytic core and F(0) containing the membrane proton channel, linked together by a central stalk and a peripheral stalk. During catalysis, ATP synthesis in the catalytic domain of F(1) is coupled via a rotary mechanism of the central stalk subunits to proton translocation. Functionally, component of the F(0) channel, it forms part of the peripheral stalk, linking F(1) to F(0). In Acorus calamus (Sweet flag), this protein is ATP synthase subunit b, chloroplastic.